We begin with the raw amino-acid sequence, 121 residues long: Large ribosomal subunit protein bL12 (121 aa).

Belongs to the bacterial ribosomal protein bL12 family. Homodimer. Part of the ribosomal stalk of the 50S ribosomal subunit. Forms a multimeric L10(L12)X complex, where L10 forms an elongated spine to which 2 to 4 L12 dimers bind in a sequential fashion. Binds GTP-bound translation factors.

Its function is as follows. Forms part of the ribosomal stalk which helps the ribosome interact with GTP-bound translation factors. Is thus essential for accurate translation. The chain is Large ribosomal subunit protein bL12 from Xanthomonas axonopodis pv. citri (strain 306).